The primary structure comprises 330 residues: Probable WRKY transcription factor 39 (330 aa).

The WRKY DNA-binding region spans 256-322; the sequence is KIADIPPDEY…YEGEHNHSRI (67 aa).

It is found in the nucleus. Transcription factor. Interacts specifically with the W box (5'-(T)TGAC[CT]-3'), a frequently occurring elicitor-responsive cis-acting element. The sequence is that of Probable WRKY transcription factor 39 (WRKY39) from Arabidopsis thaliana (Mouse-ear cress).